Consider the following 185-residue polypeptide: Testis development-related protein (185 aa).

Disordered stretches follow at residues 1–29 (MWKL…PPAA) and 121–156 (ADPE…ANSS).

Belongs to the TDRP family. As to quaternary structure, interacts with PRM2. Expressed in spermatogenic cells, especially in spermatocytes (at protein level).

It is found in the nucleus. The protein resides in the cytoplasm. Its function is as follows. Contributes to normal sperm motility, but not essential for male fertility. The sequence is that of Testis development-related protein (TDRP) from Homo sapiens (Human).